Here is a 507-residue protein sequence, read N- to C-terminus: MGQVVTFLQSLPEVINEAINIALIAISIICILKGLVNFWKCGVVQLAIFLCLAGRKCDGLMIDRRHELSHVELNLTRMFDNLPQSCSKNNTHHYYKGPKGTTWGIELTLTNTSLDSYANMSRIRSLAFGNITNCDKTGEAGHTLKWLLNELHFNVLHVTRHVGARCRVSEGAGLLIQYNLTIGDHGGEVGRHLIASLAQIIGDNKAAWVGKCDSHCTMDGKCNYTNCEGFTHYNYLIIQNTTWENHCSYSPMSTIRMALNKVAYSSVSRQLLGFFTWDISDSSGAHVPGGYCLEQWAIVWAGIKCFDNAVMAKCNKDHNVEFCDTMRLFDFNQNAIKTLQLNVENSVNLLKRSINGLISDSLVIRNSLKQLAKIPYCNYTKFWYVNDTITGKHSLPQCWLMRNGSYLNETHFKNEWLWESQNLYNEMLLKEYEDRQGKTPIALTDICFWSLVFFTSTVFLQLVGIPTHRHLVGEGCPKPHRITSNSLCACGYYKIPKRPTRWVRKGK.

Gly-2 is lipidated: N-myristoyl glycine; by host. The Extracellular segment spans residues 2–17 (GQVVTFLQSLPEVINE). The helical transmembrane segment at 18-33 (AINIALIAISIICILK) threads the bilayer. At 34–58 (GLVNFWKCGVVQLAIFLCLAGRKCD) the chain is on the cytoplasmic side. Residue Cys-57 participates in Zn(2+) binding. The Extracellular segment spans residues 59–445 (GLMIDRRHEL…QGKTPIALTD (387 aa)). 4 cysteine pairs are disulfide-bonded: Cys-86–Cys-247, Cys-292–Cys-305, Cys-314–Cys-323, and Cys-377–Cys-398. Asn-89, Asn-111, Asn-179, and Asn-240 each carry an N-linked (GlcNAc...) asparagine; by host glycan. N-linked (GlcNAc...) asparagine; by host glycosylation is found at Asn-378, Asn-386, Asn-403, and Asn-408. Residues 446 to 466 (ICFWSLVFFTSTVFLQLVGIP) form a helical membrane-spanning segment. The Cytoplasmic segment spans residues 467–507 (THRHLVGEGCPKPHRITSNSLCACGYYKIPKRPTRWVRKGK). His-468, His-470, Cys-476, His-480, Cys-488, and Cys-490 together coordinate Zn(2+).

This sequence belongs to the arenaviridae GPC protein family. As to quaternary structure, interacts with glycoprotein G2. Part of the GP complex (GP-C) together with glycoprotein G1 and glycoprotein G2. The GP-complex interacts with protein Z, which interacts with ribonucleocapsid; these interactions may induce virion budding. In terms of assembly, homotrimer; disulfide-linked. In pre-fusion state, G1 homotrimers bind G2 homotrimers via ionic interactions. Part of the GP complex (GP-C) together with glycoprotein G2 and the stable signal peptide. The GP-complex interacts with protein Z, which interacts with ribonucleocapsid; these interactions may induce virion budding. Homotrimer. Interacts with the stable signal peptide. In pre-fusion state, G2 homotrimers bind G1 homotrimers via ionic interactions. Part of the GP complex (GP-C) together with glycoprotein G1 and the stable signal peptide. Acidification in the endosome triggers rearrangements, which ultimately leads to a 6 helix bundle formed by the two heptad repeat domains (HR1 and HR2) in post-fusion state. The GP-complex interacts with protein Z, which interacts with ribonucleocapsid; these interactions may induce virion budding. In terms of processing, specific enzymatic cleavages in vivo yield mature proteins. GP-C polyprotein is cleaved in the endoplasmic reticulum by the host protease MBTPS1. Only cleaved glycoprotein is incorporated into virions. The SSP remains stably associated with the GP complex following cleavage by signal peptidase and plays crucial roles in the trafficking of GP through the secretory pathway. Post-translationally, myristoylation is necessary for GP2-mediated fusion activity.

Its subcellular location is the virion membrane. It is found in the host endoplasmic reticulum membrane. The protein localises to the host Golgi apparatus membrane. It localises to the host cell membrane. In terms of biological role, functions as a cleaved signal peptide that is retained as the third component of the GP complex (GP-C). Helps to stabilize the spike complex in its native conformation. The SSP is required for efficient glycoprotein expression, post-translational maturation cleavage of G1 and G2, glycoprotein transport to the cell surface plasma membrane, formation of infectious virus particles, and acid pH-dependent glycoprotein-mediated cell fusion. Functionally, forms the virion spikes together with glycoprotein G2. The glycoprotein spike trimers are connected to the underlying matrix. Interacts with the host receptor leading to virus endocytosis. Forms the virion spikes together with glycoprotein G1. The glycoprotein spike trimers are connected to the underlying matrix. Class I viral fusion protein that directs fusion of viral and host endosomal membranes, leading to delivery of the nucleocapsid into the cytoplasm. Membrane fusion is mediated by irreversible conformational changes induced by acidification. The chain is Pre-glycoprotein polyprotein GP complex from Allpahuayo mammarenavirus (isolate Rat/Peru/CLHP-2472/1997) (ALLV).